A 500-amino-acid polypeptide reads, in one-letter code: Cytochrome P450 71B34 (500 aa).

Residues 1–21 (MTNIWLLSLIFVICILVAVFN) form a helical membrane-spanning segment. Residue C440 coordinates heme.

It belongs to the cytochrome P450 family. Heme is required as a cofactor.

It is found in the membrane. The polypeptide is Cytochrome P450 71B34 (CYP71B34) (Arabidopsis thaliana (Mouse-ear cress)).